Consider the following 244-residue polypeptide: Ribonuclease PH (244 aa).

Phosphate contacts are provided by residues arginine 90 and glycine 128–arginine 130.

This sequence belongs to the RNase PH family. In terms of assembly, homohexameric ring arranged as a trimer of dimers.

The catalysed reaction is tRNA(n+1) + phosphate = tRNA(n) + a ribonucleoside 5'-diphosphate. Its function is as follows. Phosphorolytic 3'-5' exoribonuclease that plays an important role in tRNA 3'-end maturation. Removes nucleotide residues following the 3'-CCA terminus of tRNAs; can also add nucleotides to the ends of RNA molecules by using nucleoside diphosphates as substrates, but this may not be physiologically important. Probably plays a role in initiation of 16S rRNA degradation (leading to ribosome degradation) during starvation. The sequence is that of Ribonuclease PH from Prochlorococcus marinus (strain MIT 9313).